The following is a 212-amino-acid chain: Adenine phosphoribosyltransferase (212 aa).

This sequence belongs to the purine/pyrimidine phosphoribosyltransferase family. As to quaternary structure, homodimer.

It is found in the cytoplasm. It carries out the reaction AMP + diphosphate = 5-phospho-alpha-D-ribose 1-diphosphate + adenine. It functions in the pathway purine metabolism; AMP biosynthesis via salvage pathway; AMP from adenine: step 1/1. In terms of biological role, catalyzes a salvage reaction resulting in the formation of AMP, that is energically less costly than de novo synthesis. This chain is Adenine phosphoribosyltransferase, found in Mycobacterium tuberculosis (strain CDC 1551 / Oshkosh).